A 361-amino-acid chain; its full sequence is Phosphoserine aminotransferase (361 aa).

2 residues coordinate L-glutamate: S9 and R42. Pyridoxal 5'-phosphate contacts are provided by residues 76–77 (AR), W102, T153, D173, and Q196. An N6-(pyridoxal phosphate)lysine modification is found at K197. Residue 238 to 239 (NT) coordinates pyridoxal 5'-phosphate.

This sequence belongs to the class-V pyridoxal-phosphate-dependent aminotransferase family. SerC subfamily. In terms of assembly, homodimer. It depends on pyridoxal 5'-phosphate as a cofactor.

Its subcellular location is the cytoplasm. The enzyme catalyses O-phospho-L-serine + 2-oxoglutarate = 3-phosphooxypyruvate + L-glutamate. It carries out the reaction 4-(phosphooxy)-L-threonine + 2-oxoglutarate = (R)-3-hydroxy-2-oxo-4-phosphooxybutanoate + L-glutamate. It functions in the pathway amino-acid biosynthesis; L-serine biosynthesis; L-serine from 3-phospho-D-glycerate: step 2/3. It participates in cofactor biosynthesis; pyridoxine 5'-phosphate biosynthesis; pyridoxine 5'-phosphate from D-erythrose 4-phosphate: step 3/5. Its function is as follows. Catalyzes the reversible conversion of 3-phosphohydroxypyruvate to phosphoserine and of 3-hydroxy-2-oxo-4-phosphonooxybutanoate to phosphohydroxythreonine. The chain is Phosphoserine aminotransferase from Sodalis glossinidius (strain morsitans).